The chain runs to 383 residues: Homoserine O-acetyltransferase (383 aa).

In terms of domain architecture, AB hydrolase-1 spans Asn52–Asp362. Ser158 acts as the Nucleophile in catalysis. Substrate is bound at residue Arg227. Active-site residues include Asp323 and His356. Asp357 provides a ligand contact to substrate.

This sequence belongs to the AB hydrolase superfamily. MetX family. In terms of assembly, homodimer.

The protein resides in the cytoplasm. It carries out the reaction L-homoserine + acetyl-CoA = O-acetyl-L-homoserine + CoA. It participates in amino-acid biosynthesis; L-methionine biosynthesis via de novo pathway; O-acetyl-L-homoserine from L-homoserine: step 1/1. Functionally, transfers an acetyl group from acetyl-CoA to L-homoserine, forming acetyl-L-homoserine. This is Homoserine O-acetyltransferase from Symbiobacterium thermophilum (strain DSM 24528 / JCM 14929 / IAM 14863 / T).